The following is a 485-amino-acid chain: Silicon efflux transporter LSI3 (485 aa).

Helical transmembrane passes span 14 to 34 (VAFG…LPIG), 37 to 57 (AGAL…ADDA), 59 to 79 (ASID…GGYL), 106 to 126 (VCVV…CVVL), and 180 to 200 (FLLG…LMLL). The segment covering 233 to 242 (ALNNNKKDDG) has biased composition (basic and acidic residues). Residues 233 to 261 (ALNNNKKDDGDAATPASPEDDDGGDAESM) form a disordered region. 5 helical membrane passes run 283–303 (LFLK…YMLG), 336–356 (LLVF…TGLP), 377–397 (VLSV…TVLL), 418–438 (WLLL…GSAA), and 461–481 (HVIF…PLIG).

This sequence belongs to the arsenite-antimonite (ArsB) efflux (TC 2.A.45) family.

Its subcellular location is the cell membrane. In terms of biological role, silicon efflux transporter involved in silicon transport in shoots. In the nodes, involved with LSI2 and NIP2-2/LSI6 in silicon intervascular transfer, which is required for the preferential distribution of silicon, such as hyperaccumulation of silicon in the husk. Silicon is beneficial to plant growth and helps plants to overcome abiotic and biotic stresses by preventing lodging (falling over) and increasing resistance to pests and diseases, as well as other stresses. This chain is Silicon efflux transporter LSI3, found in Oryza sativa subsp. japonica (Rice).